Consider the following 211-residue polypeptide: Adenylate kinase (211 aa).

10–15 (GAGKGT) serves as a coordination point for ATP. Residues 30-59 (STGGILRAAIQKQTALGKKVQKVVEVGGLV) are NMP. AMP contacts are provided by residues Thr31, Arg36, 57-59 (GLV), 85-88 (GFPR), and Gln92. Residues 121 to 158 (GRRVCSACGSSYHVLFAQPKREGVCDRCRGVLVVREDD) are LID. ATP is bound at residue Arg122. Zn(2+) contacts are provided by Cys125 and Cys128. 131-132 (SY) contributes to the ATP binding site. Zn(2+) is bound by residues Cys145 and Cys148. Residues Arg155 and Arg166 each coordinate AMP. Pro194 is an ATP binding site.

Belongs to the adenylate kinase family. In terms of assembly, monomer.

Its subcellular location is the cytoplasm. It catalyses the reaction AMP + ATP = 2 ADP. It functions in the pathway purine metabolism; AMP biosynthesis via salvage pathway; AMP from ADP: step 1/1. Its function is as follows. Catalyzes the reversible transfer of the terminal phosphate group between ATP and AMP. Plays an important role in cellular energy homeostasis and in adenine nucleotide metabolism. In Treponema pallidum (strain Nichols), this protein is Adenylate kinase.